The following is a 228-amino-acid chain: Probable septum site-determining protein MinC (228 aa).

This sequence belongs to the MinC family. Interacts with MinD and FtsZ.

Cell division inhibitor that blocks the formation of polar Z ring septums. Rapidly oscillates between the poles of the cell to destabilize FtsZ filaments that have formed before they mature into polar Z rings. Prevents FtsZ polymerization. This chain is Probable septum site-determining protein MinC, found in Pectobacterium carotovorum subsp. carotovorum (strain PC1).